Consider the following 327-residue polypeptide: Malate dehydrogenase (327 aa).

Position 11-17 (11-17 (GAAGQIS)) interacts with NAD(+). The substrate site is built by Arg-92 and Arg-98. NAD(+)-binding positions include Asn-105, Gln-112, and 129-131 (VGN). 2 residues coordinate substrate: Asn-131 and Arg-162. Catalysis depends on His-187, which acts as the Proton acceptor.

Belongs to the LDH/MDH superfamily. MDH type 2 family.

The enzyme catalyses (S)-malate + NAD(+) = oxaloacetate + NADH + H(+). Catalyzes the reversible oxidation of malate to oxaloacetate. The polypeptide is Malate dehydrogenase (Nitrosomonas europaea (strain ATCC 19718 / CIP 103999 / KCTC 2705 / NBRC 14298)).